The chain runs to 370 residues: Translocating chain-associated membrane protein 2 (370 aa).

The Cytoplasmic portion of the chain corresponds to 1-22 (MAFRRRTKSYPLFSQEFIIHNH). A helical membrane pass occupies residues 23-43 (ADIGFCLVLCVLIGLMFEVTA). Residues 44–75 (KTAFLFILPQYNISVPTADSETVHYHYGPKDL) lie on the Extracellular side of the membrane. The N-linked (GlcNAc...) asparagine glycan is linked to Asn-55. A helical transmembrane segment spans residues 76–96 (VTILFYVVITIIFHAVVQEYI). The Cytoplasmic segment spans residues 97–119 (LDKISKRLHLSKVKHSKFNESGQ). The region spanning 112–321 (SKFNESGQLL…HSQLRHWREY (210 aa)) is the TLC domain. The chain crosses the membrane as a helical span at residues 120 to 140 (LLVFHLSAVAWCFYVIVTEGY). The Extracellular segment spans residues 141–159 (LTNPRSLWEDYPHVYLSFQ). Residues 160-180 (VKFFYLGQLAYWLHSLPELYF) form a helical membrane-spanning segment. The Cytoplasmic segment spans residues 181–191 (QKVRKEEVPRQ). The helical transmembrane segment at 192-209 (LQYICLYLLHITGAYLLN) threads the bilayer. At 210-214 (LSRLG) the chain is on the extracellular side. The helical transmembrane segment at 215–235 (LILLLLQYSTEALFHMARLFH) threads the bilayer. Over 236-250 (FADENNERLFNAWAA) the chain is Cytoplasmic. A helical transmembrane segment spans residues 251 to 271 (VFGVTRLFILTLAVLTIGFGL). At 272–287 (ARVENQVFDPEKGNFN) the chain is on the extracellular side. A helical transmembrane segment spans residues 288–308 (TLPCRLGMLLLVCVAQAWLMW). The Cytoplasmic segment spans residues 309–370 (RFIHSQLRHW…SSRTKKLKSP (62 aa)). Residues 332–370 (SAVPRPPAKLLKREPGYHENGVVKAENGTSSRTKKLKSP) are disordered.

Belongs to the TRAM family. Interacts with COL1A1. Interacts with SERCA2B.

Its subcellular location is the membrane. In terms of biological role, necessary for collagen type I synthesis. May couple the activity of the ER Ca(2+) pump SERCA2B with the activity of the translocon. This coupling may increase the local Ca(2+) concentration at the site of collagen synthesis, and a high Ca(2+) concentration may be necessary for the function of molecular chaperones involved in collagen folding. Required for proper insertion of the first transmembrane helix N-terminus of TM4SF20 into the ER lumen, may act as a ceramide sensor for regulated alternative translocation (RAT). This is Translocating chain-associated membrane protein 2 (Tram2) from Mus musculus (Mouse).